A 226-amino-acid polypeptide reads, in one-letter code: Charged multivesicular body protein 4 (226 aa).

Residues Ile-22–Gln-88 adopt a coiled-coil conformation. Residues Gln-169–Asn-226 are disordered.

Belongs to the SNF7 family. As to quaternary structure, homopolymer; forms elongated striated filaments of uniform ~10nm width. Monomers interact in a staggered arrangement mediated by complementary charged electrostatic surfaces. Interacts with l(2)gd1 (via DM14 domains 1 and 3); the interaction is direct and blocks access to the surface involved in homopolymerization. This interaction may be required for the ESCRT-III complex role in multivesicular body formation. Expressed at considerably higher levels in testis than in ovary. Expressed in midgut, eye, mouthparts and male accessory gland.

The protein resides in the endosome. Its subcellular location is the multivesicular body. The protein localises to the midbody. With respect to regulation, may be regulated by aurB/Aurora kinase B-dependent phosphorylation. Probable core polymerisation component of the endosomal sorting required for transport (ESCRT) III complex involved in multiple cellular processes requiring the outward bending of membranes, including vesicle budding, membrane repair and cytokinesis. The ESCRT pathway involves 4 complexes (ESCRT-0, -I, -II and -III) that sequentially assemble on the cytoplasmic side of membranes and induce membrane remodeling, budding and scission. As part of the ESCRT-III complex, involved in the budding of intraluminal vesicles (ILVs) into endosomes to form multivesicular bodies (MVBs), which target their contents for degradation via the endolysosomal pathway. Involved in regulation of signal transduction pathways, including the Notch and BMP/decapentaplegic (dpp) pathways, by sequestering the intracellular domains of activated receptors into ILVs, isolating them from the cytoplasm and targeting them for lysosomal degradation. Involved in targeting ubiquitilated proteins, such as mono-ubiquitilanated N/Notch, to MVBs for degradation. Plays a role in wing development by regulating Notch signaling. Involved in abscission of germline cells during oogenesis. Involved in spermiogenesis. Required for efficient cytoplasmic isolation and abscission during cytokinesis of epithelial sensory organ precursor cells. May be involved in septate junction remodeling and maintenance. The protein is Charged multivesicular body protein 4 of Drosophila melanogaster (Fruit fly).